The chain runs to 723 residues: Fatty acid oxidation complex subunit alpha (723 aa).

Positions 1 to 189 (MIYQAETLQV…KIGLLDAVVD (189 aa)) are enoyl-CoA hydratase/isomerase. Asp296 contacts substrate. Positions 311-723 (NKETQRAAVL…FYGAQQQGSI (413 aa)) are 3-hydroxyacyl-CoA dehydrogenase. NAD(+) is bound by residues Met325, Asp344, 401 to 403 (VVE), Lys408, and Ser430. His451 functions as the For 3-hydroxyacyl-CoA dehydrogenase activity in the catalytic mechanism. Asn454 is a binding site for NAD(+). Positions 501 and 661 each coordinate substrate.

In the N-terminal section; belongs to the enoyl-CoA hydratase/isomerase family. This sequence in the C-terminal section; belongs to the 3-hydroxyacyl-CoA dehydrogenase family. In terms of assembly, heterotetramer of two alpha chains (FadB) and two beta chains (FadA).

The catalysed reaction is a (3S)-3-hydroxyacyl-CoA + NAD(+) = a 3-oxoacyl-CoA + NADH + H(+). The enzyme catalyses a (3S)-3-hydroxyacyl-CoA = a (2E)-enoyl-CoA + H2O. It carries out the reaction a 4-saturated-(3S)-3-hydroxyacyl-CoA = a (3E)-enoyl-CoA + H2O. It catalyses the reaction (3S)-3-hydroxybutanoyl-CoA = (3R)-3-hydroxybutanoyl-CoA. The catalysed reaction is a (3Z)-enoyl-CoA = a 4-saturated (2E)-enoyl-CoA. The enzyme catalyses a (3E)-enoyl-CoA = a 4-saturated (2E)-enoyl-CoA. Its pathway is lipid metabolism; fatty acid beta-oxidation. Functionally, involved in the aerobic and anaerobic degradation of long-chain fatty acids via beta-oxidation cycle. Catalyzes the formation of 3-oxoacyl-CoA from enoyl-CoA via L-3-hydroxyacyl-CoA. It can also use D-3-hydroxyacyl-CoA and cis-3-enoyl-CoA as substrate. This chain is Fatty acid oxidation complex subunit alpha, found in Vibrio vulnificus (strain CMCP6).